The following is a 142-amino-acid chain: Hemoglobin cathodic subunit alpha (142 aa).

An N-acetylserine modification is found at serine 1. A Globin domain is found at 1–142; it reads SLTAKDKALV…LSSTAADKYR (142 aa). Histidine 59 contributes to the O2 binding site. A heme b-binding site is contributed by histidine 88.

The protein belongs to the globin family. As to quaternary structure, heterotetramer of two alpha chains and two beta chains.

In terms of biological role, involved in oxygen transport from gills to the various peripheral tissues. This chain is Hemoglobin cathodic subunit alpha, found in Hoplosternum littorale (Hassar).